We begin with the raw amino-acid sequence, 117 residues long: Small ribosomal subunit protein bS6 (117 aa).

The protein belongs to the bacterial ribosomal protein bS6 family.

Functionally, binds together with bS18 to 16S ribosomal RNA. This Roseobacter denitrificans (strain ATCC 33942 / OCh 114) (Erythrobacter sp. (strain OCh 114)) protein is Small ribosomal subunit protein bS6.